A 413-amino-acid polypeptide reads, in one-letter code: Multifunctional CCA protein (413 aa).

G8 and R11 together coordinate ATP. 2 residues coordinate CTP: G8 and R11. Mg(2+) is bound by residues D21 and D23. ATP contacts are provided by R91, R137, and R140. CTP contacts are provided by R91, R137, and R140. The HD domain occupies 228–329 (TGVHTLMTLS…VKLFDAIDAW (102 aa)).

The protein belongs to the tRNA nucleotidyltransferase/poly(A) polymerase family. Bacterial CCA-adding enzyme type 1 subfamily. As to quaternary structure, monomer. Can also form homodimers and oligomers. The cofactor is Mg(2+). Ni(2+) serves as cofactor.

It catalyses the reaction a tRNA precursor + 2 CTP + ATP = a tRNA with a 3' CCA end + 3 diphosphate. It carries out the reaction a tRNA with a 3' CCA end + 2 CTP + ATP = a tRNA with a 3' CCACCA end + 3 diphosphate. Functionally, catalyzes the addition and repair of the essential 3'-terminal CCA sequence in tRNAs without using a nucleic acid template. Adds these three nucleotides in the order of C, C, and A to the tRNA nucleotide-73, using CTP and ATP as substrates and producing inorganic pyrophosphate. tRNA 3'-terminal CCA addition is required both for tRNA processing and repair. Also involved in tRNA surveillance by mediating tandem CCA addition to generate a CCACCA at the 3' terminus of unstable tRNAs. While stable tRNAs receive only 3'-terminal CCA, unstable tRNAs are marked with CCACCA and rapidly degraded. The protein is Multifunctional CCA protein of Salmonella typhimurium (strain LT2 / SGSC1412 / ATCC 700720).